The primary structure comprises 465 residues: Cysteine--tRNA ligase (465 aa).

Position 29 (Cys29) interacts with Zn(2+). A 'HIGH' region motif is present at residues 31–41 (PTVYNYIHIGN). The Zn(2+) site is built by Cys209, His234, and Glu238. The short motif at 266–270 (KMSKS) is the 'KMSKS' region element. Lys269 provides a ligand contact to ATP. Ser270 bears the Phosphoserine mark.

Belongs to the class-I aminoacyl-tRNA synthetase family. In terms of assembly, monomer. Zn(2+) is required as a cofactor.

It localises to the cytoplasm. It catalyses the reaction tRNA(Cys) + L-cysteine + ATP = L-cysteinyl-tRNA(Cys) + AMP + diphosphate. This is Cysteine--tRNA ligase from Anoxybacillus flavithermus (strain DSM 21510 / WK1).